The sequence spans 642 residues: Threonine--tRNA ligase (642 aa).

The 61-residue stretch at 1–61 (MPIITLPDGS…EEDASLEIIT (61 aa)) folds into the TGS domain. Positions 244–535 (DHRKIGKQLD…LIEEYAGFFP (292 aa)) are catalytic. Zn(2+)-binding residues include C335, H386, and H512.

This sequence belongs to the class-II aminoacyl-tRNA synthetase family. In terms of assembly, homodimer. The cofactor is Zn(2+).

Its subcellular location is the cytoplasm. It carries out the reaction tRNA(Thr) + L-threonine + ATP = L-threonyl-tRNA(Thr) + AMP + diphosphate + H(+). Functionally, catalyzes the attachment of threonine to tRNA(Thr) in a two-step reaction: L-threonine is first activated by ATP to form Thr-AMP and then transferred to the acceptor end of tRNA(Thr). Also edits incorrectly charged L-seryl-tRNA(Thr). The protein is Threonine--tRNA ligase of Vibrio parahaemolyticus serotype O3:K6 (strain RIMD 2210633).